The sequence spans 180 residues: Acireductone dioxygenase (180 aa).

Fe(2+) is bound by residues H99, H101, E105, and H145. The Ni(2+) site is built by H99, H101, E105, and H145.

It belongs to the acireductone dioxygenase (ARD) family. Monomer. Fe(2+) serves as cofactor. Requires Ni(2+) as cofactor.

The enzyme catalyses 1,2-dihydroxy-5-(methylsulfanyl)pent-1-en-3-one + O2 = 3-(methylsulfanyl)propanoate + CO + formate + 2 H(+). It carries out the reaction 1,2-dihydroxy-5-(methylsulfanyl)pent-1-en-3-one + O2 = 4-methylsulfanyl-2-oxobutanoate + formate + 2 H(+). It participates in amino-acid biosynthesis; L-methionine biosynthesis via salvage pathway; L-methionine from S-methyl-5-thio-alpha-D-ribose 1-phosphate: step 5/6. Its function is as follows. Catalyzes 2 different reactions between oxygen and the acireductone 1,2-dihydroxy-3-keto-5-methylthiopentene (DHK-MTPene) depending upon the metal bound in the active site. Fe-containing acireductone dioxygenase (Fe-ARD) produces formate and 2-keto-4-methylthiobutyrate (KMTB), the alpha-ketoacid precursor of methionine in the methionine recycle pathway. Ni-containing acireductone dioxygenase (Ni-ARD) produces methylthiopropionate, carbon monoxide and formate, and does not lie on the methionine recycle pathway. The sequence is that of Acireductone dioxygenase from Geobacillus thermodenitrificans (strain NG80-2).